Reading from the N-terminus, the 138-residue chain is Small ribosomal subunit protein uS11c (138 aa).

A disordered region spans residues 1–22; sequence MAKPIPKIGSRKNARSGSRKHL. Over residues 9-22 the composition is skewed to basic residues; that stretch reads GSRKNARSGSRKHL.

The protein belongs to the universal ribosomal protein uS11 family. As to quaternary structure, part of the 30S ribosomal subunit.

It is found in the plastid. Its subcellular location is the chloroplast. The polypeptide is Small ribosomal subunit protein uS11c (Lotus japonicus (Lotus corniculatus var. japonicus)).